A 313-amino-acid polypeptide reads, in one-letter code: Peroxidase 57 (313 aa).

The first 22 residues, 1-22 (MMKGAKFSSLLVLFFIFPIAFA), serve as a signal peptide directing secretion. Cystine bridges form between Cys-33-Cys-109, Cys-66-Cys-71, Cys-115-Cys-309, and Cys-192-Cys-224. His-64 acts as the Proton acceptor in catalysis. Residues Asp-65, Val-68, Gly-70, Asp-72, and Ser-74 each coordinate Ca(2+). Pro-155 lines the substrate pocket. A heme b-binding site is contributed by His-185. Thr-186 contacts Ca(2+). Ca(2+) contacts are provided by Asp-233, Ser-236, and Asp-241.

It belongs to the peroxidase family. Classical plant (class III) peroxidase subfamily. Requires heme b as cofactor. It depends on Ca(2+) as a cofactor. As to expression, mainly expressed in roots.

It localises to the secreted. The catalysed reaction is 2 a phenolic donor + H2O2 = 2 a phenolic radical donor + 2 H2O. In terms of biological role, removal of H(2)O(2), oxidation of toxic reductants, biosynthesis and degradation of lignin, suberization, auxin catabolism, response to environmental stresses such as wounding, pathogen attack and oxidative stress. These functions might be dependent on each isozyme/isoform in each plant tissue. This Arabidopsis thaliana (Mouse-ear cress) protein is Peroxidase 57 (PER57).